A 133-amino-acid chain; its full sequence is Transcription antitermination protein NusB (133 aa).

It belongs to the NusB family.

Its function is as follows. Involved in transcription antitermination. Required for transcription of ribosomal RNA (rRNA) genes. Binds specifically to the boxA antiterminator sequence of the ribosomal RNA (rrn) operons. This is Transcription antitermination protein NusB from Shouchella clausii (strain KSM-K16) (Alkalihalobacillus clausii).